Reading from the N-terminus, the 820-residue chain is Serine/threonine-protein phosphatase 4 regulatory subunit 3B (820 aa).

One can recognise a WH1 domain in the interval 1-100; the sequence is MSDTRRRVKV…DEIWEKICQV (100 aa). Ser117 and Ser663 each carry phosphoserine. Positions 687-820 are disordered; sequence EDDDEEGKAV…SPRKRPRLGS (134 aa). Positions 701–732 are enriched in basic and acidic residues; that stretch reads EKSKTEDDFPDSYEKFMETKKAKESEDKENLP. Polar residues predominate over residues 744–789; sequence FSHSPSATNGTNSTNSKSVVSQTTPASSNVASSKTTSLATSVTATK. A compositionally biased stretch (acidic residues) spans 798-809; it reads YPDDEEEDEEEE. Ser811 is subject to Phosphoserine.

This sequence belongs to the SMEK family. In terms of assembly, serine/threonine-protein phosphatase 4 (PP4) occurs in different assemblies of the catalytic and one or more regulatory subunits. Component of the PP4 complex PPP4C-PPP4R2-PPP4R3B.

The protein localises to the cytoplasm. The protein resides in the cytoskeleton. It localises to the microtubule organizing center. Its subcellular location is the centrosome. It is found in the nucleus. Its function is as follows. Regulatory subunit of serine/threonine-protein phosphatase 4 (PP4). May regulate the activity of PPP4C at centrosomal microtubule organizing centers. This chain is Serine/threonine-protein phosphatase 4 regulatory subunit 3B, found in Mus musculus (Mouse).